Here is a 405-residue protein sequence, read N- to C-terminus: Multifunctional CCA protein (405 aa).

Residues Gly8 and Arg11 each contribute to the ATP site. Residues Gly8 and Arg11 each coordinate CTP. The Mg(2+) site is built by Asp21 and Asp23. Arg91, Arg137, and Arg140 together coordinate ATP. CTP contacts are provided by Arg91, Arg137, and Arg140. The region spanning 225-326 (TGVHAMLVLD…LRLLRECDAL (102 aa)) is the HD domain.

Belongs to the tRNA nucleotidyltransferase/poly(A) polymerase family. Bacterial CCA-adding enzyme type 1 subfamily. Monomer. Can also form homodimers and oligomers. Mg(2+) is required as a cofactor. Requires Ni(2+) as cofactor.

It carries out the reaction a tRNA precursor + 2 CTP + ATP = a tRNA with a 3' CCA end + 3 diphosphate. The catalysed reaction is a tRNA with a 3' CCA end + 2 CTP + ATP = a tRNA with a 3' CCACCA end + 3 diphosphate. In terms of biological role, catalyzes the addition and repair of the essential 3'-terminal CCA sequence in tRNAs without using a nucleic acid template. Adds these three nucleotides in the order of C, C, and A to the tRNA nucleotide-73, using CTP and ATP as substrates and producing inorganic pyrophosphate. tRNA 3'-terminal CCA addition is required both for tRNA processing and repair. Also involved in tRNA surveillance by mediating tandem CCA addition to generate a CCACCA at the 3' terminus of unstable tRNAs. While stable tRNAs receive only 3'-terminal CCA, unstable tRNAs are marked with CCACCA and rapidly degraded. The polypeptide is Multifunctional CCA protein (Laribacter hongkongensis (strain HLHK9)).